The primary structure comprises 67 residues: Arasin 2 (67 aa).

A signal peptide spans M1 to P25. The disordered stretch occupies residues E22–I44. Residues P31–I44 show a composition bias toward pro residues. 2 disulfide bridges follow: C50/C59 and C52/C57.

Interacts with chitin through the N-terminal region (26-48). This interaction may be important, since chitin is a component of the fungal cell wall, as well as of the crab exoskeleton (permitting a possible action of arasin in wound healing in case of lesions). Disulfide bonds are important for activity especially against Gram-negative bacteria, since the linearization of the peptide causes a strong decrease of activity on these bacteria. In terms of tissue distribution, mainly expressed in hemocytes. No or very low expression in heart, gills, inestines, and epidermis.

Its function is as follows. Antimicrobial peptide that has a large activity spectrum with activity against Gram-positive, Gram-negative bacteria, as well as against fungi. Shows activity at micromolar concentrations. Displays minimal inhibitory concentration (MIC) values lower than minimal bactericidal concentrations (MBC). May have a dual mode of action depending on the peptide concentrations. At MIC concentrations, the peptide penetrates into the cytoplasm of target cells (tested on the Gram-negative E.coli). The two inner membrane proteins YgdD and SbmA may be required for this uptake. At concentrations higher than MIC, arasin may act by disrupting membranes. Does not show hemolytic activity. The polypeptide is Arasin 2 (Hyas araneus (Atlantic lyre crab)).